Reading from the N-terminus, the 183-residue chain is tRNA-splicing endonuclease (183 aa).

Residues Tyr120, His128, and Lys159 contribute to the active site.

The protein belongs to the tRNA-intron endonuclease family. Archaeal short subfamily. As to quaternary structure, homotetramer; although the tetramer contains four active sites, only two participate in the cleavage. Therefore, it should be considered as a dimer of dimers.

The catalysed reaction is pretRNA = a 3'-half-tRNA molecule with a 5'-OH end + a 5'-half-tRNA molecule with a 2',3'-cyclic phosphate end + an intron with a 2',3'-cyclic phosphate and a 5'-hydroxyl terminus.. In terms of biological role, endonuclease that removes tRNA introns. Cleaves pre-tRNA at the 5'- and 3'-splice sites to release the intron. The products are an intron and two tRNA half-molecules bearing 2',3' cyclic phosphate and 5'-OH termini. Recognizes a pseudosymmetric substrate in which 2 bulged loops of 3 bases are separated by a stem of 4 bp. In Pyrobaculum arsenaticum (strain DSM 13514 / JCM 11321 / PZ6), this protein is tRNA-splicing endonuclease.